The primary structure comprises 492 residues: Bifunctional protein GlmU (492 aa).

The interval 1-241 is pyrophosphorylase; the sequence is MTFRGDTAVV…SALVAGVNDR (241 aa). Residues 12 to 15, K26, Q83, and 88 to 89 each bind UDP-N-acetyl-alpha-D-glucosamine; these read LAAG and GT. A Mg(2+)-binding site is contributed by D114. G151, E166, N181, and N239 together coordinate UDP-N-acetyl-alpha-D-glucosamine. N239 is a binding site for Mg(2+). The segment at 242–262 is linker; the sequence is VQLAQLGAELNRRIVAAHQMA. An N-acetyltransferase region spans residues 263–492; the sequence is GVTVIDPATT…TPPPDADQTP (230 aa). Residues R344 and K362 each coordinate UDP-N-acetyl-alpha-D-glucosamine. The Proton acceptor role is filled by H374. UDP-N-acetyl-alpha-D-glucosamine is bound by residues Y377 and N388. Residues A391, 397–398, and A434 contribute to the acetyl-CoA site; that span reads NY. A disordered region spans residues 451–492; it reads GGPQRNIEDWVQQKRPGTPSAEAARKASAEQSTPPPDADQTP. A compositionally biased stretch (pro residues) spans 483–492; the sequence is TPPPDADQTP.

The protein in the N-terminal section; belongs to the N-acetylglucosamine-1-phosphate uridyltransferase family. In the C-terminal section; belongs to the transferase hexapeptide repeat family. In terms of assembly, homotrimer. The cofactor is Mg(2+).

The protein resides in the cytoplasm. It catalyses the reaction alpha-D-glucosamine 1-phosphate + acetyl-CoA = N-acetyl-alpha-D-glucosamine 1-phosphate + CoA + H(+). It carries out the reaction N-acetyl-alpha-D-glucosamine 1-phosphate + UTP + H(+) = UDP-N-acetyl-alpha-D-glucosamine + diphosphate. The protein operates within nucleotide-sugar biosynthesis; UDP-N-acetyl-alpha-D-glucosamine biosynthesis; N-acetyl-alpha-D-glucosamine 1-phosphate from alpha-D-glucosamine 6-phosphate (route II): step 2/2. It functions in the pathway nucleotide-sugar biosynthesis; UDP-N-acetyl-alpha-D-glucosamine biosynthesis; UDP-N-acetyl-alpha-D-glucosamine from N-acetyl-alpha-D-glucosamine 1-phosphate: step 1/1. It participates in bacterial outer membrane biogenesis; LPS lipid A biosynthesis. Functionally, catalyzes the last two sequential reactions in the de novo biosynthetic pathway for UDP-N-acetylglucosamine (UDP-GlcNAc). The C-terminal domain catalyzes the transfer of acetyl group from acetyl coenzyme A to glucosamine-1-phosphate (GlcN-1-P) to produce N-acetylglucosamine-1-phosphate (GlcNAc-1-P), which is converted into UDP-GlcNAc by the transfer of uridine 5-monophosphate (from uridine 5-triphosphate), a reaction catalyzed by the N-terminal domain. In Mycobacterium marinum (strain ATCC BAA-535 / M), this protein is Bifunctional protein GlmU.